The primary structure comprises 77 residues: Acyl carrier protein (77 aa).

In terms of domain architecture, Carrier spans 2 to 77 (SNIEERVKKI…AAIDYVNSAQ (76 aa)). At serine 37 the chain carries O-(pantetheine 4'-phosphoryl)serine.

Belongs to the acyl carrier protein (ACP) family. 4'-phosphopantetheine is transferred from CoA to a specific serine of apo-ACP by AcpS. This modification is essential for activity because fatty acids are bound in thioester linkage to the sulfhydryl of the prosthetic group.

It localises to the cytoplasm. It functions in the pathway lipid metabolism; fatty acid biosynthesis. Its function is as follows. Carrier of the growing fatty acid chain in fatty acid biosynthesis. This is Acyl carrier protein from Vibrio campbellii (strain ATCC BAA-1116).